Here is a 432-residue protein sequence, read N- to C-terminus: Glutamate--tRNA ligase 2 (432 aa).

The 'HIGH' region signature appears at 6–16; it reads PSPTGDMHIGN. The 'KMSKS' region signature appears at 235–239; the sequence is KMSKR. Lysine 238 is an ATP binding site.

The protein belongs to the class-I aminoacyl-tRNA synthetase family. Glutamate--tRNA ligase type 1 subfamily. In terms of assembly, monomer.

It localises to the cytoplasm. The enzyme catalyses tRNA(Glu) + L-glutamate + ATP = L-glutamyl-tRNA(Glu) + AMP + diphosphate. Its function is as follows. Catalyzes the attachment of glutamate to tRNA(Glu) in a two-step reaction: glutamate is first activated by ATP to form Glu-AMP and then transferred to the acceptor end of tRNA(Glu). In Sulfurimonas denitrificans (strain ATCC 33889 / DSM 1251) (Thiomicrospira denitrificans (strain ATCC 33889 / DSM 1251)), this protein is Glutamate--tRNA ligase 2.